Consider the following 618-residue polypeptide: Proline--tRNA ligase (618 aa).

This sequence belongs to the class-II aminoacyl-tRNA synthetase family. ProS type 1 subfamily. As to quaternary structure, homodimer.

Its subcellular location is the cytoplasm. The catalysed reaction is tRNA(Pro) + L-proline + ATP = L-prolyl-tRNA(Pro) + AMP + diphosphate. In terms of biological role, catalyzes the attachment of proline to tRNA(Pro) in a two-step reaction: proline is first activated by ATP to form Pro-AMP and then transferred to the acceptor end of tRNA(Pro). As ProRS can inadvertently accommodate and process non-cognate amino acids such as alanine and cysteine, to avoid such errors it has two additional distinct editing activities against alanine. One activity is designated as 'pretransfer' editing and involves the tRNA(Pro)-independent hydrolysis of activated Ala-AMP. The other activity is designated 'posttransfer' editing and involves deacylation of mischarged Ala-tRNA(Pro). The misacylated Cys-tRNA(Pro) is not edited by ProRS. This Streptococcus pyogenes serotype M1 protein is Proline--tRNA ligase.